The sequence spans 613 residues: Dihydroxy-acid dehydratase (613 aa).

Position 81 (D81) interacts with Mg(2+). C122 is a binding site for [2Fe-2S] cluster. Positions 123 and 124 each coordinate Mg(2+). K124 is modified (N6-carboxylysine). A [2Fe-2S] cluster-binding site is contributed by C195. Position 491 (E491) interacts with Mg(2+). The active-site Proton acceptor is the S517.

This sequence belongs to the IlvD/Edd family. Homodimer. It depends on [2Fe-2S] cluster as a cofactor. The cofactor is Mg(2+).

It catalyses the reaction (2R)-2,3-dihydroxy-3-methylbutanoate = 3-methyl-2-oxobutanoate + H2O. The enzyme catalyses (2R,3R)-2,3-dihydroxy-3-methylpentanoate = (S)-3-methyl-2-oxopentanoate + H2O. It functions in the pathway amino-acid biosynthesis; L-isoleucine biosynthesis; L-isoleucine from 2-oxobutanoate: step 3/4. It participates in amino-acid biosynthesis; L-valine biosynthesis; L-valine from pyruvate: step 3/4. Functions in the biosynthesis of branched-chain amino acids. Catalyzes the dehydration of (2R,3R)-2,3-dihydroxy-3-methylpentanoate (2,3-dihydroxy-3-methylvalerate) into 2-oxo-3-methylpentanoate (2-oxo-3-methylvalerate) and of (2R)-2,3-dihydroxy-3-methylbutanoate (2,3-dihydroxyisovalerate) into 2-oxo-3-methylbutanoate (2-oxoisovalerate), the penultimate precursor to L-isoleucine and L-valine, respectively. The polypeptide is Dihydroxy-acid dehydratase (Vibrio parahaemolyticus serotype O3:K6 (strain RIMD 2210633)).